The sequence spans 99 residues: UPF0235 protein ASA_3628 (99 aa).

The protein belongs to the UPF0235 family.

This chain is UPF0235 protein ASA_3628, found in Aeromonas salmonicida (strain A449).